We begin with the raw amino-acid sequence, 146 residues long: UPF0260 protein VP2169 (146 aa).

Belongs to the UPF0260 family.

The polypeptide is UPF0260 protein VP2169 (Vibrio parahaemolyticus serotype O3:K6 (strain RIMD 2210633)).